The sequence spans 292 residues: MESLSLPVLNPLLASGSNLFRNQHSRMTSSMVSSLKSPIGGTSLSTVRRFGVGVVRMQAVDEDIDLKQMRDIAAAKKRWDGLLREGKVKLLTPREAGYAISLSNKPLLDVRPSSERNKAWIKGSTWVPIFDNDDNLDAGTLSKKVTSFAMGGWWSGAPTLSFNRLFLSKVEEKFPKDSELIVACQKGLRSLAACELLYNAGYENLFWVQGGLESAQDEDLVTEGVQPLKLAGIGGFSEFLGWTDQQRAQAAKEGWGYRLVYTARLFGVVLAADALFVGAQQLGHYIQELRGH.

A chloroplast-targeting transit peptide spans 1–56 (MESLSLPVLNPLLASGSNLFRNQHSRMTSSMVSSLKSPIGGTSLSTVRRFGVGVVR). The region spanning 101–224 (SLSNKPLLDV…AQDEDLVTEG (124 aa)) is the Rhodanese domain. The active-site Cysteine persulfide intermediate is the C184.

It localises to the plastid. Its subcellular location is the chloroplast. This Arabidopsis thaliana (Mouse-ear cress) protein is Rhodanese-like domain-containing protein 11, chloroplastic (STR11).